Consider the following 253-residue polypeptide: Large ribosomal subunit protein bL28m (253 aa).

The transit peptide at 1–55 (MPLHKYPPALWDVLKLKDGIYARLPEHYRRSLLEKHKPYPVHWKPHGLKYRLNPK) directs the protein to the mitochondrion.

The protein belongs to the bacterial ribosomal protein bL28 family. Component of the mitochondrial ribosome large subunit (39S) which comprises a 16S rRNA and about 50 distinct proteins.

The protein resides in the mitochondrion. The sequence is that of Large ribosomal subunit protein bL28m (mrpl28) from Xenopus laevis (African clawed frog).